The sequence spans 137 residues: Dormancy-associated protein homolog 3 (137 aa).

Disordered regions lie at residues 1–55 and 69–137; these read MGLL…DSLP and KPPG…TYGM. Polar residues predominate over residues 32–43; sequence FRPSSGNDQSEA. A compositionally biased stretch (low complexity) spans 70–87; that stretch reads PPGYQGSSAPASPAGSTP. At S81 the chain carries Phosphoserine. Pro residues predominate over residues 88 to 97; it reads PLSPFSPPLS. Basic and acidic residues predominate over residues 104–118; that stretch reads EPFRFRRRSTSDAFE. The span at 127–137 shows a compositional bias: polar residues; sequence GPRSSPPTYGM.

This sequence belongs to the DRM1/ARP family.

The sequence is that of Dormancy-associated protein homolog 3 from Arabidopsis thaliana (Mouse-ear cress).